A 142-amino-acid chain; its full sequence is Hemoglobin subunit zeta (142 aa).

An N-acetylserine modification is found at Ser-2. The 141-residue stretch at 2 to 142 folds into the Globin domain; the sequence is SLTKTERTII…VSSVLTEKYR (141 aa). At Thr-29 the chain carries Phosphothreonine. Phosphoserine is present on Ser-53. A heme b-binding site is contributed by His-59. Residues Ser-73 and Ser-82 each carry the phosphoserine modification. His-88 provides a ligand contact to heme b.

The protein belongs to the globin family. Heterotetramer of two zeta chains and two epsilon chains in early embryonic hemoglobin Gower-1; two zeta chains and two gamma chains in fetal hemoglobin Portland-1. Heterotetramer of two zeta chains and two beta chains in hemoglobin Portland-2, detected in fetuses and neonates with homozygous alpha-thalassemia. In terms of tissue distribution, detected in fetal erythrocytes (at protein level).

Functionally, the zeta chain is an alpha-type chain of mammalian embryonic hemoglobin. The chain is Hemoglobin subunit zeta (HBZ) from Homo sapiens (Human).